The primary structure comprises 89 residues: Large ribosomal subunit protein eL34 (89 aa).

Residues 1-29 are disordered; that stretch reads MSAPRFRNGTFKRTLKRVPGGRKVEHYKK. The span at 13 to 29 shows a compositional bias: basic residues; sequence RTLKRVPGGRKVEHYKK.

This sequence belongs to the eukaryotic ribosomal protein eL34 family.

The protein is Large ribosomal subunit protein eL34 of Methanosphaera stadtmanae (strain ATCC 43021 / DSM 3091 / JCM 11832 / MCB-3).